A 477-amino-acid polypeptide reads, in one-letter code: Bifunctional protein HldE (477 aa).

The tract at residues 1 to 318 (MKVTLPEFER…ENAVRGRADT (318 aa)) is ribokinase. The residue at position 179 (Lys179) is an N6-acetyllysine. 195 to 198 (NLSE) is an ATP binding site. Asp264 is an active-site residue. The cytidylyltransferase stretch occupies residues 344-477 (MTNGVFDILH…IKKIQQDKKG (134 aa)).

The protein in the N-terminal section; belongs to the carbohydrate kinase PfkB family. This sequence in the C-terminal section; belongs to the cytidylyltransferase family. As to quaternary structure, homodimer.

The catalysed reaction is D-glycero-beta-D-manno-heptose 7-phosphate + ATP = D-glycero-beta-D-manno-heptose 1,7-bisphosphate + ADP + H(+). The enzyme catalyses D-glycero-beta-D-manno-heptose 1-phosphate + ATP + H(+) = ADP-D-glycero-beta-D-manno-heptose + diphosphate. The protein operates within nucleotide-sugar biosynthesis; ADP-L-glycero-beta-D-manno-heptose biosynthesis; ADP-L-glycero-beta-D-manno-heptose from D-glycero-beta-D-manno-heptose 7-phosphate: step 1/4. Its pathway is nucleotide-sugar biosynthesis; ADP-L-glycero-beta-D-manno-heptose biosynthesis; ADP-L-glycero-beta-D-manno-heptose from D-glycero-beta-D-manno-heptose 7-phosphate: step 3/4. Its function is as follows. Catalyzes the phosphorylation of D-glycero-D-manno-heptose 7-phosphate at the C-1 position to selectively form D-glycero-beta-D-manno-heptose-1,7-bisphosphate. In terms of biological role, catalyzes the ADP transfer from ATP to D-glycero-beta-D-manno-heptose 1-phosphate, yielding ADP-D-glycero-beta-D-manno-heptose. This Escherichia coli O9:H4 (strain HS) protein is Bifunctional protein HldE.